The primary structure comprises 77 residues: Oxyopinin-4a (77 aa).

A signal peptide spans 1-20; the sequence is MKISQVFIFVFLLMISVAWA. Residues 21 to 47 constitute a propeptide that is removed on maturation; sequence NEAYEEESNYLSERFDADVEEITPEFR. Cys-51 and Cys-57 are disulfide-bonded.

Expressed by the venom gland.

Its subcellular location is the secreted. It is found in the target cell membrane. Disrupts cell membranes through the formation of pores. Has antibacterial activity against Gram-positive bacteria S.aureus (MIC=10 uM) and B.subtilis (MIC=0.5 uM) as well as Gram-negative bacteria P.fluorescens (MIC=1 uM) and E.coli (MIC=0.5 uM). Has hemolytic activity against human erythrocytes (EC(50)=7 uM). This chain is Oxyopinin-4a, found in Oxyopes takobius (Lynx spider).